A 33-amino-acid polypeptide reads, in one-letter code: Beta-amanitin proprotein (33 aa).

Residues 1-10 (MSDINATRLP) constitute a propeptide that is removed on maturation. The segment at residues 11 to 18 (IWGIGCDP) is a cross-link (cyclopeptide (Ile-Pro)). A cross-link (2'-cysteinyl-6'-hydroxytryptophan sulfoxide (Trp-Cys)) is located at residues 12–16 (WGIGC). The propeptide occupies 19–33 (CVGDDVTAVLTRGEA).

This sequence belongs to the MSDIN fungal toxin family. Processed by the macrocyclase-peptidase enzyme POPB to yield a toxic cyclic decapeptide. POPB first removes 10 residues from the N-terminus. Conformational trapping of the remaining peptide forces the enzyme to release this intermediate rather than proceed to macrocyclization. The enzyme rebinds the remaining peptide in a different conformation and catalyzes macrocyclization of the N-terminal 8 residues.

Its function is as follows. Toxin belonging to the bicyclic octapeptides amatoxins that acts by binding non-competitively to RNA polymerase II and greatly slowing the elongation of transcripts from target promoters. The sequence is that of Beta-amanitin proprotein from Amanita pallidorosea.